A 158-amino-acid polypeptide reads, in one-letter code: Molybdopterin synthase catalytic subunit (158 aa).

Substrate-binding positions include 107–108 (HR), lysine 123, and 130–132 (KKE).

The protein belongs to the MoaE family. MOCS2B subfamily. As to quaternary structure, heterotetramer; composed of 2 small (mocs2s) and 2 large (mocs2l) subunits.

Its subcellular location is the cytoplasm. It catalyses the reaction 2 [molybdopterin-synthase sulfur-carrier protein]-C-terminal-Gly-aminoethanethioate + cyclic pyranopterin phosphate + H2O = molybdopterin + 2 [molybdopterin-synthase sulfur-carrier protein]-C-terminal Gly-Gly + 2 H(+). It functions in the pathway cofactor biosynthesis; molybdopterin biosynthesis. In terms of biological role, catalytic subunit of the molybdopterin synthase complex, a complex that catalyzes the conversion of precursor Z into molybdopterin. Acts by mediating the incorporation of 2 sulfur atoms from thiocarboxylated mocs2s into precursor Z to generate a dithiolene group. This chain is Molybdopterin synthase catalytic subunit (mocs2l), found in Dictyostelium discoideum (Social amoeba).